We begin with the raw amino-acid sequence, 1469 residues long: snRNA-activating protein complex subunit 4 (1469 aa).

Residues 16 to 82 (ELERILDPGS…DPKDKTLPED (67 aa)) are disordered. Low complexity predominate over residues 24-36 (GSSGSHVEISESS). Over residues 37-53 (LESDSEADSLPSEDLDP) the composition is skewed to acidic residues. S68 is subject to Phosphoserine. The tract at residues 84–133 (ETCLQLNMVYQEVIQEKLAEANLLLAQNREQQEELMRDLAGSKGTKVKDG) is SNAPC5-binding. A Myb-like 1 domain is found at 250–288 (EEALLGNRLDSHDWEKISNINFEGSRSAEEIRKFWQNSE). The HTH myb-type 1 domain maps to 289–343 (HPSINKQEWSREEEERLQAIAAAHGHLEWQKIAEELGTSRSAFQCLQKFQQHNKA). A DNA-binding region (H-T-H motif) is located at residues 317–341 (WQKIAEELGTSRSAFQCLQKFQQHN). The region spanning 344-395 (LKRKEWTEEEDRMLTQLVQEMRVGSHIPYRRIVYYMEGRDSMQLIYRWTKSL) is the Myb-like 2 domain. HTH myb-type domains follow at residues 396 to 451 (DPGL…HFSL) and 452 to 503 (KKGR…GKKQ). 2 DNA-binding regions (H-T-H motif) span residues 424–447 (WFKI…LRRL) and 476–499 (WAKI…KIMM). Disordered stretches follow at residues 501–558 (KKQG…GDRA), 577–661 (QSTS…QALE), 685–710 (RSCT…SGDS), 834–894 (ASSS…KTVS), 932–981 (PLPH…DKRL), 1001–1051 (PAAS…PSPT), 1121–1167 (AAQG…PAEA), and 1184–1266 (IPEP…GPEK). Positions 503–516 (QGLRRRRRRARHSV) are enriched in basic residues. Low complexity predominate over residues 519–541 (SSTSSSGSSSGSSGGSSSSSSSS). S599 is subject to Phosphoserine. Polar residues predominate over residues 602-618 (KGSSASQGGSKEASTTA). A Phosphoserine modification is found at S626. A compositionally biased stretch (pro residues) spans 932–944 (PLPHTPHGRPAPG). Positions 951 to 968 (PLSGPGAPAAAKPGTSGS) are enriched in low complexity. The segment covering 1014-1029 (ISVSCPESGLGQSQAP) has biased composition (polar residues). The segment covering 1039-1051 (EAPPFLPAAPSPT) has biased composition (pro residues). T1157 carries the post-translational modification Phosphothreonine. The span at 1184–1195 (IPEPRTSSHADP) shows a compositional bias: basic and acidic residues. Position 1224 is a phosphoserine (S1224). The tract at residues 1281-1393 (ATQQWLGGQR…QGVRTTLSVP (113 aa)) is SNAPC2-binding. Residues S1398, S1400, and S1440 each carry the phosphoserine modification. Residues 1430 to 1449 (APDSGKCSASSCLDTSNDPD) are disordered. A compositionally biased stretch (polar residues) spans 1436–1445 (CSASSCLDTS).

As to quaternary structure, part of the SNAPc complex composed of 5 subunits: SNAPC1, SNAPC2, SNAPC3, SNAPC4 and SNAPC5. SNAPC4 interacts with SNAPC1, SNAPC2, SNAPC5, BRF2 and TBP.

It is found in the nucleus. In terms of biological role, part of the SNAPc complex required for the transcription of both RNA polymerase II and III small-nuclear RNA genes. Binds to the proximal sequence element (PSE), a non-TATA-box basal promoter element common to these 2 types of genes. Recruits TBP and BRF2 to the U6 snRNA TATA box. This chain is snRNA-activating protein complex subunit 4, found in Homo sapiens (Human).